We begin with the raw amino-acid sequence, 296 residues long: MIIHPNFDPVAIHLGPLAVRWYGLMYLVGFIFAIVVGRLRLKLPHVAAQGWSAKDIDDMMFYGVLGVVLGGRLGYVLFYKAGYYFSHPLDIFRVWEGGMSFHGGFLGVTLAMALFAWQRKRHWLEVTDFVAPMVPTGLAAGRLGNFINGELWGRVTSPDAPWAMLFPGASRDDAAWLAAHQDIAAKWNLNEVFLSHQMLPRHPSQLYEIALEGIALFFVLWFFSRKPRPMGAISALFLIGYGAARFTVEFAREPDDFLGLLTFGLSMGQWLSLPMIVAGVLMMIWAYRRGGVAKQA.

Transmembrane regions (helical) follow at residues 17-37 (LAVR…IVVG), 59-79 (MMFY…VLFY), and 97-117 (GGMS…LFAW). Arginine 142 is a binding site for a 1,2-diacyl-sn-glycero-3-phospho-(1'-sn-glycerol). A run of 2 helical transmembrane segments spans residues 230–250 (MGAI…TVEF) and 265–285 (LSMG…MMIW).

This sequence belongs to the Lgt family.

Its subcellular location is the cell inner membrane. It carries out the reaction L-cysteinyl-[prolipoprotein] + a 1,2-diacyl-sn-glycero-3-phospho-(1'-sn-glycerol) = an S-1,2-diacyl-sn-glyceryl-L-cysteinyl-[prolipoprotein] + sn-glycerol 1-phosphate + H(+). The protein operates within protein modification; lipoprotein biosynthesis (diacylglyceryl transfer). Functionally, catalyzes the transfer of the diacylglyceryl group from phosphatidylglycerol to the sulfhydryl group of the N-terminal cysteine of a prolipoprotein, the first step in the formation of mature lipoproteins. This Burkholderia pseudomallei (strain 668) protein is Phosphatidylglycerol--prolipoprotein diacylglyceryl transferase.